The chain runs to 119 residues: Dihydroneopterin aldolase (119 aa).

Residues E21, Y53, and 72-73 (IE) contribute to the substrate site. K99 functions as the Proton donor/acceptor in the catalytic mechanism.

It belongs to the DHNA family.

The catalysed reaction is 7,8-dihydroneopterin = 6-hydroxymethyl-7,8-dihydropterin + glycolaldehyde. Its pathway is cofactor biosynthesis; tetrahydrofolate biosynthesis; 2-amino-4-hydroxy-6-hydroxymethyl-7,8-dihydropteridine diphosphate from 7,8-dihydroneopterin triphosphate: step 3/4. Catalyzes the conversion of 7,8-dihydroneopterin to 6-hydroxymethyl-7,8-dihydropterin. In Streptococcus pyogenes serotype M6 (strain ATCC BAA-946 / MGAS10394), this protein is Dihydroneopterin aldolase (folB).